Here is a 383-residue protein sequence, read N- to C-terminus: Cell division protein FtsZ (383 aa).

GTP-binding positions include 20 to 24, 107 to 109, glutamate 138, arginine 142, and asparagine 186; these read GGGGN and GTG.

It belongs to the FtsZ family. As to quaternary structure, homodimer. Polymerizes to form a dynamic ring structure in a strictly GTP-dependent manner. Interacts directly with several other division proteins.

The protein localises to the cytoplasm. In terms of biological role, essential cell division protein that forms a contractile ring structure (Z ring) at the future cell division site. The regulation of the ring assembly controls the timing and the location of cell division. One of the functions of the FtsZ ring is to recruit other cell division proteins to the septum to produce a new cell wall between the dividing cells. Binds GTP and shows GTPase activity. The chain is Cell division protein FtsZ from Shigella flexneri.